A 215-amino-acid polypeptide reads, in one-letter code: MSKVYDWFEERLEIQAIADDITSKYVPPHVNIFYCLGGITLTCFLVQVATGFAMTFYYRPTVTEAFASVQYIMTEANFGWLIRSVHRWSASMMVLMMILHVFRVYLTGGFKKPRELTWVTGVVLGVLTASFGVTGYSLPRDQIGYWAVKIVTGVPEAIPVIGSPLVELLRGSASVGQSTLTRFYSLHTFVLPLLTAVFMLMHFLMIRKQGISGPL.

A helical transmembrane segment spans residues 32–52 (IFYCLGGITLTCFLVQVATGF). Cys35 is a heme c binding site. His86 and His100 together coordinate heme b. 3 helical membrane-spanning segments follow: residues 90 to 110 (ASMM…TGGF), 116 to 136 (LTWV…VTGY), and 186 to 206 (LHTF…FLMI). 2 residues coordinate heme b: His187 and His202.

It belongs to the cytochrome b family. PetB subfamily. The 4 large subunits of the cytochrome b6-f complex are cytochrome b6, subunit IV (17 kDa polypeptide, PetD), cytochrome f and the Rieske protein, while the 4 small subunits are PetG, PetL, PetM and PetN. The complex functions as a dimer. Heme b serves as cofactor. It depends on heme c as a cofactor.

Its subcellular location is the plastid. It is found in the chloroplast thylakoid membrane. In terms of biological role, component of the cytochrome b6-f complex, which mediates electron transfer between photosystem II (PSII) and photosystem I (PSI), cyclic electron flow around PSI, and state transitions. The protein is Cytochrome b6 of Gossypium barbadense (Sea Island cotton).